The chain runs to 494 residues: Cobyric acid synthase (494 aa).

A GATase cobBQ-type domain is found at 252 to 444 (DLNIAVIRLP…LHGLFDNGPW (193 aa)). Cys333 (nucleophile) is an active-site residue. His436 is an active-site residue.

Belongs to the CobB/CobQ family. CobQ subfamily.

It participates in cofactor biosynthesis; adenosylcobalamin biosynthesis. Its function is as follows. Catalyzes amidations at positions B, D, E, and G on adenosylcobyrinic A,C-diamide. NH(2) groups are provided by glutamine, and one molecule of ATP is hydrogenolyzed for each amidation. The sequence is that of Cobyric acid synthase from Nostoc punctiforme (strain ATCC 29133 / PCC 73102).